The primary structure comprises 146 residues: Protein LDOC1 (146 aa).

This sequence belongs to the LDOC1 family. As to quaternary structure, interacts with NOD2. As to expression, ubiquitously expressed with high levels in brain ant thyroid and low expression in placenta, liver and leukocytes. Expressed as well in six of the seven human breast cancer cell lines examined.

It localises to the nucleus. May have an important role in the development and/or progression of some cancers. The protein is Protein LDOC1 (LDOC1) of Homo sapiens (Human).